The following is a 313-amino-acid chain: Cytochrome c biogenesis protein CcsA (313 aa).

Helical transmembrane passes span 13–35 (ISFSIISIVITTHLMTFAREIAG), 43–63 (GMIAVFLRITGLLVTRWIYSG), 67–87 (LSNLYESLIFLSWGFSLIHMI), 96–116 (FLSSITAPSAILTQGFVTSGL), 142–162 (MLLSYAALLCGSLLSIALLVI), 219–239 (VIGIGFTLLTLGILSGAVWAN), 252–269 (ETWAFITWTISAIYLHTR), and 280–300 (AIVASIGFLIIWICYFGVNLL).

It belongs to the CcmF/CycK/Ccl1/NrfE/CcsA family. In terms of assembly, may interact with Ccs1.

The protein resides in the plastid. The protein localises to the chloroplast thylakoid membrane. Required during biogenesis of c-type cytochromes (cytochrome c6 and cytochrome f) at the step of heme attachment. This is Cytochrome c biogenesis protein CcsA from Amborella trichopoda.